We begin with the raw amino-acid sequence, 134 residues long: Large ribosomal subunit protein uL22 (134 aa).

It belongs to the universal ribosomal protein uL22 family. Part of the 50S ribosomal subunit.

Its function is as follows. This protein binds specifically to 23S rRNA; its binding is stimulated by other ribosomal proteins, e.g. L4, L17, and L20. It is important during the early stages of 50S assembly. It makes multiple contacts with different domains of the 23S rRNA in the assembled 50S subunit and ribosome. The globular domain of the protein is located near the polypeptide exit tunnel on the outside of the subunit, while an extended beta-hairpin is found that lines the wall of the exit tunnel in the center of the 70S ribosome. This is Large ribosomal subunit protein uL22 from Karelsulcia muelleri (strain GWSS) (Sulcia muelleri).